We begin with the raw amino-acid sequence, 445 residues long: Branched-chain amino acid permease BraB (445 aa).

A run of 12 helical transmembrane segments spans residues 11-31, 45-65, 79-99, 122-142, 158-178, 192-212, 233-253, 275-295, 311-331, 339-359, 375-395, and 415-435; these read IIIG…IYPP, IGGF…AIAL, PVFG…LFAI, LSLL…ALNP, FTII…GLGA, FLEG…VVVV, AGVI…YLGA, YLFG…ACLT, LIPA…SLII, IIAF…VIIV, IACL…AAGF, and IGWV…TLFI.

The protein belongs to the branched chain amino acid transporter family.

It localises to the cell membrane. In terms of biological role, branched-chain amino acid transport system which is involved in the uptake of isoleucine, valine and probably leucine. Together with BcaP and BrnQ, plays an important role in the activation of CodY, a branched-chain amino acid-responsive transcriptional regulator that controls the expression of several dozen transcription units in B.subtilis. The chain is Branched-chain amino acid permease BraB from Bacillus subtilis (strain 168).